Consider the following 418-residue polypeptide: Phosphoglycerate kinase (418 aa).

Residues Asp18 to Asn20, Arg34, His57 to Arg60, Arg115, and Arg171 each bind substrate. ATP-binding positions include Lys224, Gly315, Glu346, and Gly375–Ser378.

This sequence belongs to the phosphoglycerate kinase family. As to quaternary structure, monomer.

It localises to the cytoplasm. It carries out the reaction (2R)-3-phosphoglycerate + ATP = (2R)-3-phospho-glyceroyl phosphate + ADP. Its pathway is carbohydrate degradation; glycolysis; pyruvate from D-glyceraldehyde 3-phosphate: step 2/5. The sequence is that of Phosphoglycerate kinase from Porphyromonas gingivalis (strain ATCC BAA-308 / W83).